The following is a 389-amino-acid chain: Probable transcription factor FL (389 aa).

Disordered stretches follow at residues 1 to 41 (MDPN…ANVP) and 140 to 226 (EHDM…HPFV). Residues 19–39 (PPAPAPVPPPPPPPPPPPPAN) show a composition bias toward pro residues. Over residues 159-180 (VTGKKQAKKGSAARKGKKARRK) the composition is skewed to basic residues. Residues 161 to 168 (GKKQAKKG) carry the Nuclear localization signal motif. Residues 190-201 (QEDEMDCCDEDG) are compositionally biased toward acidic residues. DNA-binding regions lie at residues 221–225 (REHPF), 290–297 (NKPKMRHY), and 361–364 (YVPT).

It belongs to the FLO/LFY family. As to quaternary structure, interacts with APO1. In terms of tissue distribution, in very young panicle but not in mature florets, mature leaves, roots or apical meristems.

It is found in the nucleus. Probable transcription factor. Together with APO1, involved in the temporal regulation of meristem size and identity during both vegetative and reproductive developments through interaction with APO1. Promotes flowering. This is Probable transcription factor FL from Oryza sativa subsp. japonica (Rice).